The chain runs to 374 residues: Protein RecA (374 aa).

Residue 66 to 73 coordinates ATP; it reads GPESSGKT. The interval 327–374 is disordered; sequence LGVGVHPEESATEPGADAASAAPADAAPAVPAPTTAKATKSKAAAAKS. Positions 338–374 are enriched in low complexity; that stretch reads TEPGADAASAAPADAAPAVPAPTTAKATKSKAAAAKS.

The protein belongs to the RecA family.

The protein resides in the cytoplasm. Its function is as follows. Can catalyze the hydrolysis of ATP in the presence of single-stranded DNA, the ATP-dependent uptake of single-stranded DNA by duplex DNA, and the ATP-dependent hybridization of homologous single-stranded DNAs. It interacts with LexA causing its activation and leading to its autocatalytic cleavage. This is Protein RecA from Streptomyces lividans.